The primary structure comprises 398 residues: 1,4-beta-D-glucan cellobiohydrolase CEL6C (398 aa).

The signal sequence occupies residues 1–18 (MKITSSAAALALVASAVA). Residue Asn70 is glycosylated (N-linked (GlcNAc...) asparagine). Asp125 is a catalytic residue. Asp170 serves as the catalytic Proton donor. Positions 218, 318, 346, and 350 each coordinate substrate.

The protein belongs to the glycosyl hydrolase 6 (cellulase B) family. In terms of processing, both N- and O-glycosylated.

Its subcellular location is the secreted. It carries out the reaction Hydrolysis of (1-&gt;4)-beta-D-glucosidic linkages in cellulose and cellotetraose, releasing cellobiose from the non-reducing ends of the chains.. Functionally, exoglucanase that plays an important function in biomass degradation by catalyzing the hydrolysis of the non-reducing end beta-1,4-glucosidic linkages in cellulose and cellotetraose to release cellobiose. Hydrolyzes crystalline and amorphous cellulose but is inactive on hydroxyethyl cellulose, mannan, galactomannan, xyloglucan, arabinoxylan, arabinan, xylan, and pectin. This chain is 1,4-beta-D-glucan cellobiohydrolase CEL6C, found in Podospora anserina (strain S / ATCC MYA-4624 / DSM 980 / FGSC 10383) (Pleurage anserina).